The following is a 196-amino-acid chain: Imidazoleglycerol-phosphate dehydratase (196 aa).

It belongs to the imidazoleglycerol-phosphate dehydratase family.

The protein resides in the cytoplasm. It catalyses the reaction D-erythro-1-(imidazol-4-yl)glycerol 3-phosphate = 3-(imidazol-4-yl)-2-oxopropyl phosphate + H2O. It participates in amino-acid biosynthesis; L-histidine biosynthesis; L-histidine from 5-phospho-alpha-D-ribose 1-diphosphate: step 6/9. The chain is Imidazoleglycerol-phosphate dehydratase from Nitratidesulfovibrio vulgaris (strain DSM 19637 / Miyazaki F) (Desulfovibrio vulgaris).